We begin with the raw amino-acid sequence, 386 residues long: Manganese dependent endoglucanase Eg5A (386 aa).

The first 17 residues, 1 to 17 (MLKYASIALALATLGVA), serve as a signal peptide directing secretion. The 36-residue stretch at 18-53 (QQQQWGQCGGIGWTGATTCVAGSVCSVLNPYYSQCI) folds into the CBM1 domain. Catalysis depends on Glu-209, which acts as the Proton donor. The active-site Nucleophile is Glu-319. Asn-324 carries N-linked (GlcNAc...) asparagine glycosylation.

Belongs to the glycosyl hydrolase 5 (cellulase A) family. Mn(2+) serves as cofactor.

Its subcellular location is the secreted. It carries out the reaction Endohydrolysis of (1-&gt;4)-beta-D-glucosidic linkages in cellulose, lichenin and cereal beta-D-glucans.. Functionally, secreted manganese dependent endoglucanase that acts by cleaving the beta-1,4-glucose linkage. Exhibits high activity toward carboxymethyl-cellulose (CMC), barley glucan, and glucomannan. Displays low activity on larminarin and xyloglucan but does not hydrolyze hemicellulose substrates such as birchwood xylan, arabinoxylan, and arabinan. The protein is Manganese dependent endoglucanase Eg5A of Phanerodontia chrysosporium (White-rot fungus).